The following is a 663-amino-acid chain: tRNA (guanine(26)-N(2))-dimethyltransferase (663 aa).

A mitochondrion-targeting transit peptide spans 1–16 (MSLARTILWLSRPLRP). The Trm1 methyltransferase domain maps to 56–498 (ATVTEGAAKI…APPEALWDIM (443 aa)). Residue arginine 83 coordinates S-adenosyl-L-methionine. Serine 121 carries the post-translational modification Phosphoserine. Arginine 165 and aspartate 183 together coordinate S-adenosyl-L-methionine. Zn(2+) is bound by residues cysteine 347, cysteine 350, cysteine 383, and cysteine 386. A Phosphoserine modification is found at serine 516. A disordered region spans residues 534-574 (IREDANPSSRQRGLKRFQANPEANWGPRPRARPGGKAASED). The short motif at 540–572 (PSSRQRGLKRFQANPEANWGPRPRARPGGKAAS) is the Nuclear localization signal element. Residues 599–626 (RLKTFPCKRFKEGTCQLGDQCCYSHSPA) form a C3H1-type zinc finger. Serine 624 is modified (phosphoserine). Residues 632-663 (GDIPIEECPETTTKISPGPKAAAGGIPGPGVD) form a disordered region.

It belongs to the class I-like SAM-binding methyltransferase superfamily. Trm1 family.

It localises to the mitochondrion. The protein localises to the nucleus. Its subcellular location is the cytoplasm. It carries out the reaction guanosine(26) in tRNA + 2 S-adenosyl-L-methionine = N(2)-dimethylguanosine(26) in tRNA + 2 S-adenosyl-L-homocysteine + 2 H(+). Functionally, dimethylates a single guanine residue at position 26 of most nuclear- and mitochondrial-encoded tRNAs using S-adenosyl-L-methionine as donor of the methyl groups. tRNA guanine(26)-dimethylation is required for redox homeostasis and ensure proper cellular proliferation and oxidative stress survival. The polypeptide is tRNA (guanine(26)-N(2))-dimethyltransferase (Mus musculus (Mouse)).